A 1027-amino-acid polypeptide reads, in one-letter code: Xyloglucanase (1027 aa).

The first 32 residues, 1–32 (MKTFLGKKLWMASLAVALAAGSFAALPEMTSA), serve as a signal peptide directing secretion. Residue aspartate 70 is the Nucleophile of the active site. BNR repeat units lie at residues 134–143 (RSTDRGDTWQ), 185–196 (WRSSDYGATWSK), 252–262 (YRSTDGGATWT), and 357–367 (FRSKDGGTTWT). Residue aspartate 479 is the Proton donor of the active site. BNR repeat units lie at residues 537-545 (SSDGGTNWY) and 717-727 (FRSDDGGASWV). One can recognise a CBM3 domain in the interval 876–1027 (PEGSIRIEMY…SGTLQWGIEP (152 aa)).

The protein belongs to the glycosyl hydrolase 74 family.

Functionally, hydrolyzes the glucosidic bonds of unbranched Glc residues in tamarind seed xyloglucan, producing XXXG, XLXG, XXLG and XLLG. May have a dual endo- and exo- mode of action towards xyloglucan, or may have an endo-processive mode of action. In Paenibacillus sp, this protein is Xyloglucanase.